The following is a 299-amino-acid chain: GTPase Era (299 aa).

One can recognise an Era-type G domain in the interval 5 to 172 (KSGFVSIIGR…IDVLKTYLPE (168 aa)). The segment at 13 to 20 (GRPNVGKS) is G1. 13–20 (GRPNVGKS) is a GTP binding site. The interval 39-43 (QTTRN) is G2. Positions 60–63 (DTPG) are G3. GTP contacts are provided by residues 60–64 (DTPGI) and 122–125 (NKID). The interval 122–125 (NKID) is G4. Positions 151 to 153 (ISA) are G5. Residues 203–280 (TSEEIPHAIG…YLELWVKVQK (78 aa)) enclose the KH type-2 domain.

It belongs to the TRAFAC class TrmE-Era-EngA-EngB-Septin-like GTPase superfamily. Era GTPase family. Monomer.

It is found in the cytoplasm. It localises to the cell membrane. Its function is as follows. An essential GTPase that binds both GDP and GTP, with rapid nucleotide exchange. Plays a role in 16S rRNA processing and 30S ribosomal subunit biogenesis and possibly also in cell cycle regulation and energy metabolism. In Staphylococcus haemolyticus (strain JCSC1435), this protein is GTPase Era.